The primary structure comprises 149 residues: Large ribosomal subunit protein eL24A (149 aa).

2 stretches are compositionally biased toward basic and acidic residues: residues 93-102 and 116-125; these read KRNQRPEVRA and KAASESEKKA. Positions 93–149 are disordered; sequence KRNQRPEVRAAARAAALKQRKDKKAASESEKKAIKAKSAASSARGQAIKNAKAAARH.

Belongs to the eukaryotic ribosomal protein eL24 family. Component of the large ribosomal subunit (LSU). Mature yeast ribosomes consist of a small (40S) and a large (60S) subunit. The 40S small subunit contains 1 molecule of ribosomal RNA (18S rRNA) and at least 33 different proteins. The large 60S subunit contains 3 rRNA molecules (25S, 5.8S and 5S rRNA) and at least 46 different proteins.

The protein resides in the cytoplasm. In terms of biological role, component of the ribosome, a large ribonucleoprotein complex responsible for the synthesis of proteins in the cell. The small ribosomal subunit (SSU) binds messenger RNAs (mRNAs) and translates the encoded message by selecting cognate aminoacyl-transfer RNA (tRNA) molecules. The large subunit (LSU) contains the ribosomal catalytic site termed the peptidyl transferase center (PTC), which catalyzes the formation of peptide bonds, thereby polymerizing the amino acids delivered by tRNAs into a polypeptide chain. The nascent polypeptides leave the ribosome through a tunnel in the LSU and interact with protein factors that function in enzymatic processing, targeting, and the membrane insertion of nascent chains at the exit of the ribosomal tunnel. The protein is Large ribosomal subunit protein eL24A (rpl2401) of Schizosaccharomyces pombe (strain 972 / ATCC 24843) (Fission yeast).